The chain runs to 376 residues: Dihydroorotate dehydrogenase (quinone) (376 aa).

FMN-binding positions include 74-78 (AGFDK) and Thr-98. Residue Lys-78 coordinates substrate. 123 to 127 (NRMGF) contacts substrate. Residues Asn-155 and Asn-188 each coordinate FMN. Asn-188 serves as a coordination point for substrate. Ser-191 serves as the catalytic Nucleophile. Asn-193 contacts substrate. Residues Lys-226 and Thr-254 each coordinate FMN. Substrate is bound at residue 255–256 (NT). Residues Gly-284, Gly-313, and 334–335 (YT) contribute to the FMN site.

This sequence belongs to the dihydroorotate dehydrogenase family. Type 2 subfamily. In terms of assembly, monomer. FMN serves as cofactor.

The protein resides in the cell membrane. It carries out the reaction (S)-dihydroorotate + a quinone = orotate + a quinol. Its pathway is pyrimidine metabolism; UMP biosynthesis via de novo pathway; orotate from (S)-dihydroorotate (quinone route): step 1/1. Functionally, catalyzes the conversion of dihydroorotate to orotate with quinone as electron acceptor. The polypeptide is Dihydroorotate dehydrogenase (quinone) (Nostoc punctiforme (strain ATCC 29133 / PCC 73102)).